The sequence spans 157 residues: Small ribosomal subunit protein bS16 (157 aa).

Residues 125-141 are compositionally biased toward basic and acidic residues; it reads KRKAAKKAAEEAAAKEA. Residues 125-157 are disordered; that stretch reads KRKAAKKAAEEAAAKEAEAEEAAEDKAEEESAE. A compositionally biased stretch (acidic residues) spans 142–157; it reads EAEEAAEDKAEEESAE.

This sequence belongs to the bacterial ribosomal protein bS16 family.

This chain is Small ribosomal subunit protein bS16, found in Corynebacterium kroppenstedtii (strain DSM 44385 / JCM 11950 / CIP 105744 / CCUG 35717).